Here is a 149-residue protein sequence, read N- to C-terminus: Cyanate hydratase (149 aa).

Residues R90, E93, and S116 contribute to the active site.

The protein belongs to the cyanase family.

It carries out the reaction cyanate + hydrogencarbonate + 3 H(+) = NH4(+) + 2 CO2. Catalyzes the reaction of cyanate with bicarbonate to produce ammonia and carbon dioxide. This is Cyanate hydratase from Synechocystis sp. (strain ATCC 27184 / PCC 6803 / Kazusa).